Here is a 65-residue protein sequence, read N- to C-terminus: Large ribosomal subunit protein bL35 (65 aa).

Residues 1-22 (MPKIKTVRGAAKRFKKTGSGGF) are disordered. Over residues 10-22 (AAKRFKKTGSGGF) the composition is skewed to basic residues.

This sequence belongs to the bacterial ribosomal protein bL35 family.

This Serratia proteamaculans (strain 568) protein is Large ribosomal subunit protein bL35.